The primary structure comprises 234 residues: Orotidine 5'-phosphate decarboxylase (234 aa).

Residues aspartate 14, lysine 36, 63–72 (DLKFHDIPNT), threonine 123, arginine 184, glutamine 193, glycine 213, and arginine 214 contribute to the substrate site. Residue lysine 65 is the Proton donor of the active site.

This sequence belongs to the OMP decarboxylase family. Type 1 subfamily. As to quaternary structure, homodimer.

It catalyses the reaction orotidine 5'-phosphate + H(+) = UMP + CO2. It participates in pyrimidine metabolism; UMP biosynthesis via de novo pathway; UMP from orotate: step 2/2. Functionally, catalyzes the decarboxylation of orotidine 5'-monophosphate (OMP) to uridine 5'-monophosphate (UMP). This Pseudoalteromonas translucida (strain TAC 125) protein is Orotidine 5'-phosphate decarboxylase.